The sequence spans 703 residues: Calpain-8 (703 aa).

Positions 45–344 (LFKDPEFPAC…FSRLEICNLS (300 aa)) constitute a Calpain catalytic domain. Residues cysteine 105, histidine 262, and asparagine 286 contribute to the active site. The tract at residues 355 to 512 (KWNLVLFNGR…VFSEKKAQAL (158 aa)) is domain III. A linker region spans residues 513–531 (EIGDAVPGDPHEPHPRDMD). EF-hand domains lie at 531 to 566 (DGED…LLSK), 575 to 610 (FNIN…ICKY), 605 to 640 (LKIC…AGFT), and 670 to 703 (IRLE…RALV). A domain IV region spans residues 532–703 (GEDEHFWSLS…LAEWLCRALV (172 aa)). Ca(2+) contacts are provided by aspartate 588, aspartate 590, threonine 592, serine 594, glutamate 599, aspartate 618, serine 620, threonine 624, and glutamate 629.

The protein belongs to the peptidase C2 family. In terms of assembly, monomer and homooligomer. Interacts with COPS1/GPS1, COPB1, EYA2, NME2, NME4 and TOMM70. It depends on Ca(2+) as a cofactor. In terms of processing, undergoes autolytic cleavage between Ala-5 and Ala-6 which gives rise to fragments extending from Ala-6 to the C-terminus, Ala-6 to the EF-hand 2 domain and from Ala-6 to the beginning of domain III. Predominantly expressed in the stomach. Localizes strictly to the surface mucus cells in the gastric epithelium and the mucus-secreting goblet cells in the duodenum.

The protein resides in the cytoplasm. It localises to the golgi apparatus. The catalysed reaction is Broad endopeptidase specificity.. The concentration of calcium for half-maximal activity is 0.3 mM. Inhibited by calpastatin and calpeptin. Calcium-regulated non-lysosomal thiol-protease. Involved in membrane trafficking in the gastric surface mucus cells (pit cells) and may involve the membrane trafficking of mucus cells via interactions with coat protein. Proteolytically cleaves the beta-subunit of coatomer complex. The chain is Calpain-8 (Capn8) from Mus musculus (Mouse).